Reading from the N-terminus, the 1053-residue chain is SPX and EXS domain-containing protein 2 (1053 aa).

Residues 1–339 (MKFRDYLKDN…PRIAKECRKY (339 aa)) enclose the SPX domain. The span at 54–88 (NNINKNNNNNNNNNNNNNNNNNNNNNINNNNNNNN) shows a compositional bias: low complexity. The disordered stretch occupies residues 54–137 (NNINKNNNNN…VGDEDGGDDD (84 aa)). The span at 95–112 (QTNSNNISIPNQMAPQES) shows a compositional bias: polar residues. The span at 113-122 (SGEDEDDENE) shows a compositional bias: acidic residues. Transmembrane regions (helical) follow at residues 391–411 (YIIG…IFKF), 427–447 (MAWL…LFAL), 476–496 (YLMY…VYVD), 510–530 (YLLL…ILPF), 561–581 (FFMS…QQIV), 595–615 (GVCF…PFYW), 630–652 (FFPH…LLWV), 666–686 (ILWF…DFTV), 712–732 (WVYY…LIVF), and 745–765 (PLFL…FIFF). Residues 596–798 (VCFKHKAVIF…SQDYKNYMEE (203 aa)) enclose the EXS domain. 2 disordered regions span residues 799–871 (KKSR…VDDE) and 1023–1053 (HPEL…NKSR). A compositionally biased stretch (acidic residues) spans 842–853 (DDDDDDESIDSD). Residues 1023-1040 (HPELNSSNRNQVDPNSPM) are compositionally biased toward polar residues.

It belongs to the SYG1 (TC 2.A.94) family.

The protein localises to the membrane. The chain is SPX and EXS domain-containing protein 2 from Dictyostelium discoideum (Social amoeba).